Reading from the N-terminus, the 100-residue chain is Urease subunit gamma (100 aa).

This sequence belongs to the urease gamma subunit family. Heterotrimer of UreA (gamma), UreB (beta) and UreC (alpha) subunits. Three heterotrimers associate to form the active enzyme.

Its subcellular location is the cytoplasm. The catalysed reaction is urea + 2 H2O + H(+) = hydrogencarbonate + 2 NH4(+). It participates in nitrogen metabolism; urea degradation; CO(2) and NH(3) from urea (urease route): step 1/1. The protein is Urease subunit gamma of Marinomonas sp. (strain MWYL1).